A 101-amino-acid polypeptide reads, in one-letter code: NAD(P)H-quinone oxidoreductase subunit 4L, chloroplastic (101 aa).

Transmembrane regions (helical) follow at residues 2-22 (MLEH…YGLI), 32-52 (MCLE…SGFF), and 61-81 (IFSV…LAIV).

It belongs to the complex I subunit 4L family. NDH is composed of at least 16 different subunits, 5 of which are encoded in the nucleus.

The protein localises to the plastid. Its subcellular location is the chloroplast thylakoid membrane. The catalysed reaction is a plastoquinone + NADH + (n+1) H(+)(in) = a plastoquinol + NAD(+) + n H(+)(out). The enzyme catalyses a plastoquinone + NADPH + (n+1) H(+)(in) = a plastoquinol + NADP(+) + n H(+)(out). NDH shuttles electrons from NAD(P)H:plastoquinone, via FMN and iron-sulfur (Fe-S) centers, to quinones in the photosynthetic chain and possibly in a chloroplast respiratory chain. The immediate electron acceptor for the enzyme in this species is believed to be plastoquinone. Couples the redox reaction to proton translocation, and thus conserves the redox energy in a proton gradient. The polypeptide is NAD(P)H-quinone oxidoreductase subunit 4L, chloroplastic (Jasminum nudiflorum (Winter jasmine)).